The chain runs to 235 residues: Sugar fermentation stimulation protein homolog (235 aa).

This sequence belongs to the SfsA family.

This chain is Sugar fermentation stimulation protein homolog, found in Aliivibrio fischeri (strain MJ11) (Vibrio fischeri).